A 116-amino-acid chain; its full sequence is C-C motif chemokine 6 (116 aa).

Residues 1–21 (MRNSKTAISFFILVAVLGSQA) form the signal peptide. 3 disulfide bridges follow: cysteine 50-cysteine 73, cysteine 51-cysteine 89, and cysteine 60-cysteine 100.

Belongs to the intercrine beta (chemokine CC) family. Post-translationally, the N-terminal is proteolytically cleaved by proteases associated with inflammatory responses. The processed forms CL6(22-95) and CCL6(23-95) show increase in CCR1-mediated signaling and chemotaxis assays in vitro. Expressed in myelopoietic bone marrow cultures stimulated by GM-CSF.

The protein resides in the secreted. Chemotactic factor that attracts mostly macrophage, but it can also attract B cells, CD4(+) lymphocytes and eosinophils. The polypeptide is C-C motif chemokine 6 (Ccl6) (Mus musculus (Mouse)).